The chain runs to 381 residues: S-(hydroxymethyl)glutathione dehydrogenase (381 aa).

Residue Cys-49 coordinates Zn(2+). His-50 lines the NAD(+) pocket. 7 residues coordinate Zn(2+): His-71, Glu-72, Cys-101, Cys-104, Cys-107, Cys-115, and Cys-178. NAD(+) is bound by residues 203–208, Asp-227, and 298–300; these read GGGIVG and IGV.

The protein belongs to the zinc-containing alcohol dehydrogenase family. Class-III subfamily. Requires Zn(2+) as cofactor.

It carries out the reaction a primary alcohol + NAD(+) = an aldehyde + NADH + H(+). The catalysed reaction is a secondary alcohol + NAD(+) = a ketone + NADH + H(+). It catalyses the reaction S-(hydroxymethyl)glutathione + NADP(+) = S-formylglutathione + NADPH + H(+). The enzyme catalyses S-(hydroxymethyl)glutathione + NAD(+) = S-formylglutathione + NADH + H(+). It carries out the reaction S-nitrosoglutathione + NADH + H(+) = S-(hydroxysulfenamide)glutathione + NAD(+). In terms of biological role, oxidizes long-chain alcohols and, in the presence of glutathione, is able to oxidize formaldehyde. Also acts as a S-nitroso-glutathione reductase by catalyzing the NADH-dependent reduction of S-nitrosoglutathione, thereby regulating protein S-nitrosylation. This is S-(hydroxymethyl)glutathione dehydrogenase (FDH1) from Candida maltosa (Yeast).